Consider the following 651-residue polypeptide: DNA topoisomerase 3 (651 aa).

Residues 1 to 134 (MRLFIAEKPS…KRDKILRCLI (134 aa)) form the Toprim domain. Positions 7, 103, and 105 each coordinate Mg(2+). A Topo IA-type catalytic domain is found at 155–612 (FIPLATSALA…NLNQILPDLV (458 aa)). The interaction with DNA stretch occupies residues 194 to 199 (SVGRVQ). Tyr-337 acts as the O-(5'-phospho-DNA)-tyrosine intermediate in catalysis. Positions 631 to 651 (SDRAKPKSAVKKSSKSNGETD) are disordered.

Belongs to the type IA topoisomerase family. Requires Mg(2+) as cofactor.

The catalysed reaction is ATP-independent breakage of single-stranded DNA, followed by passage and rejoining.. Functionally, releases the supercoiling and torsional tension of DNA, which is introduced during the DNA replication and transcription, by transiently cleaving and rejoining one strand of the DNA duplex. Introduces a single-strand break via transesterification at a target site in duplex DNA. The scissile phosphodiester is attacked by the catalytic tyrosine of the enzyme, resulting in the formation of a DNA-(5'-phosphotyrosyl)-enzyme intermediate and the expulsion of a 3'-OH DNA strand. The free DNA strand then undergoes passage around the unbroken strand, thus removing DNA supercoils. Finally, in the religation step, the DNA 3'-OH attacks the covalent intermediate to expel the active-site tyrosine and restore the DNA phosphodiester backbone. The protein is DNA topoisomerase 3 of Haemophilus influenzae (strain ATCC 51907 / DSM 11121 / KW20 / Rd).